We begin with the raw amino-acid sequence, 365 residues long: Palmitoyltransferase ZDHHC20 (365 aa).

The Cytoplasmic portion of the chain corresponds to 1–14 (MAPCTLWRCCQRTV). Residues 15 to 35 (GWVPVLFITFVVVWSYYAYVV) traverse the membrane as a helical segment. Topologically, residues 36 to 53 (ELCVFTLSGNGENGKAVV) are lumenal. A helical membrane pass occupies residues 54–74 (YLVAFHLFFVMFVWSYWMTIF). The Cytoplasmic portion of the chain corresponds to 75-169 (TSPASPSKEF…NNCVGFSNYK (95 aa)). One can recognise a DHHC domain in the interval 126–176 (RYCERCQLIKPDRAHHCSACDMCILKMDHHCPWVNNCVGFSNYKFFLLFLF). The Zn(2+) site is built by cysteine 128 and cysteine 131. Substrate contacts are provided by residues lysine 135 and 140–143 (HHCS). Zn(2+) contacts are provided by histidine 141, cysteine 142, cysteine 145, cysteine 148, and histidine 155. Cysteine 156 functions as the S-palmitoyl cysteine intermediate in the catalytic mechanism. Cysteine 162 serves as a coordination point for Zn(2+). The chain crosses the membrane as a helical span at residues 170–190 (FFLLFLFYSLLYCLFVATTVL). The Lumenal segment spans residues 191–207 (QYFIKFWTNELTDTRAK). The chain crosses the membrane as a helical span at residues 208-231 (FHVLFLFFVSTMFFISVLSLLSYH). Residues 232–365 (CWLVGKNRTT…NNHVTVAIEN (134 aa)) lie on the Cytoplasmic side of the membrane. Residues 301–365 (PEQASVSNQS…NNHVTVAIEN (65 aa)) are disordered. The segment covering 302 to 321 (EQASVSNQSESARSIGSNQP) has biased composition (polar residues). Phosphoserine occurs at positions 305 and 330.

It belongs to the DHHC palmitoyltransferase family. In terms of processing, autopalmitoylated (in vitro).

It is found in the golgi apparatus membrane. The protein localises to the cell membrane. The protein resides in the cytoplasm. Its subcellular location is the perinuclear region. It localises to the endoplasmic reticulum membrane. It is found in the endoplasmic reticulum-Golgi intermediate compartment membrane. The enzyme catalyses L-cysteinyl-[protein] + hexadecanoyl-CoA = S-hexadecanoyl-L-cysteinyl-[protein] + CoA. It carries out the reaction L-cysteinyl-[protein] + tetradecanoyl-CoA = S-tetradecanoyl-L-cysteinyl-[protein] + CoA. The catalysed reaction is L-cysteinyl-[protein] + octadecanoyl-CoA = S-octadecanoyl-L-cysteinyl-[protein] + CoA. Its function is as follows. Palmitoyltransferase that could catalyze the addition of palmitate onto various protein substrates. Catalyzes palmitoylation of Cys residues in the cytoplasmic C-terminus of EGFR, and modulates the duration of EGFR signaling by modulating palmitoylation-dependent EGFR internalization and degradation. Has a preference for acyl-CoA with C16 fatty acid chains. Can also utilize acyl-CoA with C14 and C18 fatty acid chains. May palmitoylate CALHM1 subunit of gustatory voltage-gated ion channels and modulate channel gating and kinetics. This Bos taurus (Bovine) protein is Palmitoyltransferase ZDHHC20.